The primary structure comprises 351 residues: Histidine protein kinase SaeS (351 aa).

Transmembrane regions (helical) follow at residues 9–29 (IIIG…IAYI) and 40–60 (TLTL…SIFI). The 54-residue stretch at 61–114 (NPLIQKIKQFNIKTKQFANGNYASNDKTFNSPKEIYELNQSFNKMASEITQQMN) folds into the HAMP domain. Positions 129-348 (NLAHDLKTPL…TMTVTLHKLD (220 aa)) constitute a Histidine kinase domain. Phosphohistidine; by autocatalysis is present on His-132.

In terms of processing, autophosphorylated.

The protein resides in the cell membrane. The enzyme catalyses ATP + protein L-histidine = ADP + protein N-phospho-L-histidine.. Functionally, member of the two-component regulatory system SaeR/SaeS involved in the regulation of staphylococcal virulence factors in a strain-dependent fashion. Probably functions as a membrane-associated protein kinase that upon sensing the appropriate signal, autophosphorylates and in turn activates the cytosolic response regulator SaeR. SaeR/SaeS activates the expression of exoproteins involved in adhesion and invasion of host cells, including hemolysins (hla, hlb, hlgC), coa, DNase, spa and cell wall-associated proteins (emp, eap, fnbA, fnbB, efb). Represses the expression of type 5 capsular polysaccharide (cap operon). Also modulates the expression of several other genes. The chain is Histidine protein kinase SaeS (saeS) from Staphylococcus aureus (strain Newman).